We begin with the raw amino-acid sequence, 230 residues long: Ribonuclease 3 (230 aa).

Residues 5 to 134 (NDTISKVINY…LIGAIYIDGG (130 aa)) enclose the RNase III domain. Residue Glu47 participates in Mg(2+) binding. Asp51 is an active-site residue. The Mg(2+) site is built by Asn120 and Glu123. The active site involves Glu123. The DRBM domain occupies 159–228 (DPKTSLQEWT…AELILEKIKK (70 aa)).

This sequence belongs to the ribonuclease III family. In terms of assembly, homodimer. Mg(2+) is required as a cofactor.

It localises to the cytoplasm. It catalyses the reaction Endonucleolytic cleavage to 5'-phosphomonoester.. Digests double-stranded RNA. Involved in the processing of primary rRNA transcript to yield the immediate precursors to the large and small rRNAs (23S and 16S). Processes some mRNAs, and tRNAs when they are encoded in the rRNA operon. Processes pre-crRNA and tracrRNA of type II CRISPR loci if present in the organism. The protein is Ribonuclease 3 of Wolbachia pipientis subsp. Culex pipiens (strain wPip).